Consider the following 152-residue polypeptide: UPF0225 protein YchJ (152 aa).

The protein belongs to the UPF0225 family.

This is UPF0225 protein YchJ from Shigella boydii serotype 18 (strain CDC 3083-94 / BS512).